The chain runs to 234 residues: uncharacterized protein (234 aa).

This is an uncharacterized protein from Escherichia coli (strain K12).